Reading from the N-terminus, the 287-residue chain is Pyridoxal kinase PdxY (287 aa).

Residues S9 and 44-45 (TQ) contribute to the substrate site. Residues D111, A143, E148, K181, and 208-211 (RPLV) contribute to the ATP site. D223 provides a ligand contact to substrate.

The protein belongs to the pyridoxine kinase family. PdxY subfamily. Homodimer. The cofactor is Mg(2+).

The enzyme catalyses pyridoxal + ATP = pyridoxal 5'-phosphate + ADP + H(+). It participates in cofactor metabolism; pyridoxal 5'-phosphate salvage; pyridoxal 5'-phosphate from pyridoxal: step 1/1. Its function is as follows. Pyridoxal kinase involved in the salvage pathway of pyridoxal 5'-phosphate (PLP). Catalyzes the phosphorylation of pyridoxal to PLP. In Photorhabdus laumondii subsp. laumondii (strain DSM 15139 / CIP 105565 / TT01) (Photorhabdus luminescens subsp. laumondii), this protein is Pyridoxal kinase PdxY.